The primary structure comprises 580 residues: Jasmonoyl--L-amino acid synthetase JAR6 (580 aa).

Ser-100 contributes to the ATP binding site. Ser-103 is a jasmonate binding site. ATP-binding positions include Met-120, Thr-123, Gly-164, Asn-169, and 332–337 (GSSEGW). 167–171 (TTNVY) is a binding site for an L-alpha-amino acid. A jasmonate-binding site is contributed by 329–332 (ADYG). Position 534–538 (534–538 (KILDH)) interacts with an L-alpha-amino acid.

Belongs to the IAA-amido conjugating enzyme family.

The catalysed reaction is a jasmonate + an L-alpha-amino acid + ATP = a jasmonyl-L-amino acid + AMP + diphosphate + H(+). Catalyzes the synthesis of jasmonate-amino acid conjugates by adenylation. Catalyzes the conjugation of jasmonate (JA) to Ile, Leu and Val. Catalyzes the conjugation of JA to Ile that may mediate defense signaling and resistance to the herbivore Manduca sexta caterpillars. In Nicotiana attenuata (Coyote tobacco), this protein is Jasmonoyl--L-amino acid synthetase JAR6 (JAR6).